A 973-amino-acid polypeptide reads, in one-letter code: UvrABC system protein A (973 aa).

34–41 is a binding site for ATP; sequence GLSGSGKS. 2 ABC transporter domains span residues 331 to 609 and 629 to 958; these read WAKS…PKSL and PKKK…QFLK. ATP is bound at residue 662-669; it reads GVSGGGKS. Residues 761–787 form a C4-type zinc finger; that stretch reads CEACQGDGVIKIEMHFLPDVYVTCDVC.

This sequence belongs to the ABC transporter superfamily. UvrA family. Forms a heterotetramer with UvrB during the search for lesions.

It is found in the cytoplasm. In terms of biological role, the UvrABC repair system catalyzes the recognition and processing of DNA lesions. UvrA is an ATPase and a DNA-binding protein. A damage recognition complex composed of 2 UvrA and 2 UvrB subunits scans DNA for abnormalities. When the presence of a lesion has been verified by UvrB, the UvrA molecules dissociate. The chain is UvrABC system protein A from Rhizobium meliloti (strain 1021) (Ensifer meliloti).